Reading from the N-terminus, the 202-residue chain is Glycerol-3-phosphate acyltransferase 1 (202 aa).

5 helical membrane passes run 8 to 28 (AGMIDLFMILGAYLLGGMSTG), 85 to 105 (LSLTTLILCLIAGVAGHIWPL), 122 to 142 (ILVVDPMLASAAAGVFLFVLA), 146 to 166 (QFTLSGLAAILGAPILSLIMA), and 173 to 190 (AGLAVLAIFILLAHRKNI).

This sequence belongs to the PlsY family. In terms of assembly, probably interacts with PlsX.

Its subcellular location is the cell membrane. The catalysed reaction is an acyl phosphate + sn-glycerol 3-phosphate = a 1-acyl-sn-glycero-3-phosphate + phosphate. It participates in lipid metabolism; phospholipid metabolism. Its function is as follows. Catalyzes the transfer of an acyl group from acyl-phosphate (acyl-PO(4)) to glycerol-3-phosphate (G3P) to form lysophosphatidic acid (LPA). This enzyme utilizes acyl-phosphate as fatty acyl donor, but not acyl-CoA or acyl-ACP. The polypeptide is Glycerol-3-phosphate acyltransferase 1 (Desulfitobacterium hafniense (strain Y51)).